Here is a 55-residue protein sequence, read N- to C-terminus: Large ribosomal subunit protein bL33 (55 aa).

This sequence belongs to the bacterial ribosomal protein bL33 family.

The sequence is that of Large ribosomal subunit protein bL33 from Ruegeria pomeroyi (strain ATCC 700808 / DSM 15171 / DSS-3) (Silicibacter pomeroyi).